Consider the following 547-residue polypeptide: Glucose-6-phosphate isomerase (547 aa).

The active-site Proton donor is the Glu351. Residues His382 and Lys510 contribute to the active site.

This sequence belongs to the GPI family.

The protein localises to the cytoplasm. It carries out the reaction alpha-D-glucose 6-phosphate = beta-D-fructose 6-phosphate. The protein operates within carbohydrate biosynthesis; gluconeogenesis. It participates in carbohydrate degradation; glycolysis; D-glyceraldehyde 3-phosphate and glycerone phosphate from D-glucose: step 2/4. Its function is as follows. Catalyzes the reversible isomerization of glucose-6-phosphate to fructose-6-phosphate. In Beijerinckia indica subsp. indica (strain ATCC 9039 / DSM 1715 / NCIMB 8712), this protein is Glucose-6-phosphate isomerase.